The primary structure comprises 523 residues: uncharacterized protein (523 aa).

The N-terminal 63 residues, 1–63 (MACVSTCLIL…NRHGIAVVKA (63 aa)), are a transit peptide targeting the chloroplast. The next 3 helical transmembrane spans lie at 180 to 200 (VSFG…IIAL), 386 to 406 (ALVI…NTLL), and 423 to 443 (IYPL…IRWF).

It localises to the plastid. The protein resides in the chloroplast membrane. This is an uncharacterized protein from Arabidopsis thaliana (Mouse-ear cress).